A 318-amino-acid chain; its full sequence is UDP-N-acetylenolpyruvoylglucosamine reductase (318 aa).

The FAD-binding PCMH-type domain maps to Ile-38–Gly-204. Arg-182 is an active-site residue. The disordered stretch occupies residues Ser-212–Gly-232. Residues Leu-213–Lys-229 are compositionally biased toward basic and acidic residues. Ser-233 acts as the Proton donor in catalysis. Glu-310 is an active-site residue.

The protein belongs to the MurB family. FAD serves as cofactor.

The protein localises to the cytoplasm. It carries out the reaction UDP-N-acetyl-alpha-D-muramate + NADP(+) = UDP-N-acetyl-3-O-(1-carboxyvinyl)-alpha-D-glucosamine + NADPH + H(+). It functions in the pathway cell wall biogenesis; peptidoglycan biosynthesis. Functionally, cell wall formation. This chain is UDP-N-acetylenolpyruvoylglucosamine reductase, found in Leptospira borgpetersenii serovar Hardjo-bovis (strain L550).